Reading from the N-terminus, the 305-residue chain is Regulator of microtubule dynamics protein 1 (305 aa).

Lys160 bears the N6-succinyllysine mark. TPR repeat units lie at residues 163 to 199 (AICI…NPKD) and 217 to 253 (PWYQ…DPNF). Lys245 bears the N6-succinyllysine mark.

This sequence belongs to the RMDN family. In terms of assembly, interacts with microtubules.

The protein resides in the cytoplasm. It is found in the cytoskeleton. It localises to the spindle. The protein localises to the spindle pole. The chain is Regulator of microtubule dynamics protein 1 (Rmdn1) from Mus musculus (Mouse).